Reading from the N-terminus, the 369-residue chain is Cobalt-precorrin-5B C(1)-methyltransferase (369 aa).

Belongs to the CbiD family.

The enzyme catalyses Co-precorrin-5B + S-adenosyl-L-methionine = Co-precorrin-6A + S-adenosyl-L-homocysteine. Its pathway is cofactor biosynthesis; adenosylcobalamin biosynthesis; cob(II)yrinate a,c-diamide from sirohydrochlorin (anaerobic route): step 6/10. Its function is as follows. Catalyzes the methylation of C-1 in cobalt-precorrin-5B to form cobalt-precorrin-6A. In Leptospira borgpetersenii serovar Hardjo-bovis (strain JB197), this protein is Cobalt-precorrin-5B C(1)-methyltransferase.